The primary structure comprises 60 residues: Large ribosomal subunit protein bL32 (60 aa).

Belongs to the bacterial ribosomal protein bL32 family.

The polypeptide is Large ribosomal subunit protein bL32 (Streptococcus gordonii (strain Challis / ATCC 35105 / BCRC 15272 / CH1 / DL1 / V288)).